We begin with the raw amino-acid sequence, 78 residues long: U7-lycotoxin-Ls1h (78 aa).

Residues 1–22 (MKLIIFTGLTLLLIVSLIDVEA) form the signal peptide. A propeptide spanning residues 23–26 (QNEG) is cleaved from the precursor.

Belongs to the neurotoxin 19 (CSTX) family. 07 (U7-Lctx) subfamily. In terms of processing, contains 4 disulfide bonds. In terms of tissue distribution, expressed by the venom gland.

The protein resides in the secreted. The sequence is that of U7-lycotoxin-Ls1h from Lycosa singoriensis (Wolf spider).